Here is a 320-residue protein sequence, read N- to C-terminus: Cytochrome f (320 aa).

A signal peptide spans 1–35 (MQTRNTFSWIKEQITRSISASLMIYIITRTSISNA). Heme contacts are provided by Y36, C56, C59, and H60. The helical transmembrane segment at 286-306 (VQGLLFFFAAVILAQIFLVLK) threads the bilayer.

It belongs to the cytochrome f family. The 4 large subunits of the cytochrome b6-f complex are cytochrome b6, subunit IV (17 kDa polypeptide, petD), cytochrome f and the Rieske protein, while the 4 small subunits are PetG, PetL, PetM and PetN. The complex functions as a dimer. The cofactor is heme.

Its subcellular location is the plastid. It localises to the chloroplast thylakoid membrane. Functionally, component of the cytochrome b6-f complex, which mediates electron transfer between photosystem II (PSII) and photosystem I (PSI), cyclic electron flow around PSI, and state transitions. This is Cytochrome f from Helianthus annuus (Common sunflower).